The following is a 344-amino-acid chain: L-rhamnose-proton symporter (344 aa).

The next 10 helical transmembrane spans lie at 4–24, 38–58, 68–88, 101–121, 137–157, 175–195, 214–234, 259–279, 290–310, and 323–343; these read AITM…CFYA, WSVG…ALLL, FSLS…IGNI, MGIG…TPII, TLLG…AGQL, LVLA…MNAA, LPSY…FCFI, VLLS…YAWG, ISWM…GLVL, and VLSL…IGMA.

The protein belongs to the L-rhamnose transporter (TC 2.A.7.6) family.

It localises to the cell inner membrane. It catalyses the reaction L-rhamnopyranose(in) + H(+)(in) = L-rhamnopyranose(out) + H(+)(out). Its function is as follows. Uptake of L-rhamnose across the cytoplasmic membrane with the concomitant transport of protons into the cell (symport system). The sequence is that of L-rhamnose-proton symporter from Escherichia coli (strain 55989 / EAEC).